A 134-amino-acid chain; its full sequence is 15.4 kDa class V heat shock protein (134 aa).

One can recognise a sHSP domain in the interval 19 to 126 (SLNNYQENHV…LIDPSDVPES (108 aa)).

Belongs to the small heat shock protein (HSP20) family. As to quaternary structure, may form oligomeric structures.

It localises to the cytoplasm. The protein is 15.4 kDa class V heat shock protein (HSP15.4) of Arabidopsis thaliana (Mouse-ear cress).